Reading from the N-terminus, the 314-residue chain is Altered inheritance of mitochondria protein 6 homolog ARB_06966 (314 aa).

An N-terminal signal peptide occupies residues 1–21 (MKSSILASAAILAASLEPVAA). N-linked (GlcNAc...) asparagine glycosylation is found at Asn91 and Asn184.

The protein belongs to the AIM6 family.

It localises to the secreted. The protein is Altered inheritance of mitochondria protein 6 homolog ARB_06966 of Arthroderma benhamiae (strain ATCC MYA-4681 / CBS 112371) (Trichophyton mentagrophytes).